Consider the following 220-residue polypeptide: tRNA (guanine-N(7)-)-methyltransferase (220 aa).

S-adenosyl-L-methionine is bound by residues Glu-44, Glu-69, Asp-96, and Asp-118. The active site involves Asp-118. Substrate is bound at residue Lys-122. The tract at residues 124 to 129 (RHEKRR) is interaction with RNA. Substrate is bound by residues Asp-154 and 191–194 (TEYE).

It belongs to the class I-like SAM-binding methyltransferase superfamily. TrmB family.

The catalysed reaction is guanosine(46) in tRNA + S-adenosyl-L-methionine = N(7)-methylguanosine(46) in tRNA + S-adenosyl-L-homocysteine. It functions in the pathway tRNA modification; N(7)-methylguanine-tRNA biosynthesis. Functionally, catalyzes the formation of N(7)-methylguanine at position 46 (m7G46) in tRNA. In Halalkalibacterium halodurans (strain ATCC BAA-125 / DSM 18197 / FERM 7344 / JCM 9153 / C-125) (Bacillus halodurans), this protein is tRNA (guanine-N(7)-)-methyltransferase.